A 401-amino-acid polypeptide reads, in one-letter code: Methionyl-tRNA formyltransferase, mitochondrial (401 aa).

A mitochondrion-targeting transit peptide spans 1 to 26; the sequence is MVKMRRITPTRLLFTCRYISNNASPP. (6R)-10-formyltetrahydrofolate is bound by residues 18 to 20 and 66 to 70; these read YIS and VVTRS.

It belongs to the Fmt family. Phosphorylated by GCN2 in response to nutrient deprivation. Phosphorylation mediates retention of FMT1 in the cytoplasm.

Its subcellular location is the mitochondrion. The protein localises to the mitochondrion matrix. It localises to the cytoplasm. It carries out the reaction L-methionyl-tRNA(fMet) + (6R)-10-formyltetrahydrofolate = N-formyl-L-methionyl-tRNA(fMet) + (6S)-5,6,7,8-tetrahydrofolate + H(+). Functionally, formylates methionyl-tRNA in mitochondria and the cytoplasm. Responsible for the formylation of the 8 N-terminally formylated (Nt-formylated) mitochondrial matrix proteins that are encoded by mitochondrial DNA. Nt-formylated proteins in the cytoplasm are strongly up-regulated in stationary phase or upon starvation for specific amino acids (His or Lys) and are targeted for degradation by a PSH1 E3 ubiquitin ligase-mediated fMet/N-end rule pathway. Increased Nt-formylation of cytosolic proteins appears to be important for adaptation to these stresses. Stationary phase-degraded Nt-formylated proteins include histone H3-like centromeric protein CSE4, Mediator complex subunit 3 (PGD1) and small ribosomal subunit protein uS8-A (RPS22A). This is Methionyl-tRNA formyltransferase, mitochondrial (FMT1) from Saccharomyces cerevisiae (strain ATCC 204508 / S288c) (Baker's yeast).